Reading from the N-terminus, the 229-residue chain is UPF0228 protein MA_3119 (229 aa).

The segment covering 35–66 has biased composition (low complexity); sequence STPVNTSTPVNTSTPVNTSTPVNTSTPVSTST. The interval 35–67 is disordered; the sequence is STPVNTSTPVNTSTPVNTSTPVNTSTPVSTSTI.

This sequence belongs to the UPF0228 family.

The sequence is that of UPF0228 protein MA_3119 from Methanosarcina acetivorans (strain ATCC 35395 / DSM 2834 / JCM 12185 / C2A).